We begin with the raw amino-acid sequence, 403 residues long: F-box/kelch-repeat protein At5g43190 (403 aa).

Positions 45 to 91 constitute an F-box domain; that stretch reads PNIWSNLPNHLLEHILSLLPFKTLLTLRSISRHLRSLILSPSFISDH. Kelch repeat units lie at residues 91–140, 192–240, 291–339, and 343–393; these read HSFS…LLSS, KIFT…VFYN, ILYM…VCYH, and HVYC…FRWF.

This Arabidopsis thaliana (Mouse-ear cress) protein is F-box/kelch-repeat protein At5g43190.